Here is a 664-residue protein sequence, read N- to C-terminus: ATP synthase subunit alpha 2 (664 aa).

180–187 (GDRATGKT) provides a ligand contact to ATP. Positions 525–664 (MPAEDAAGDI…DAEAEARHKR (140 aa)) are disordered. Positions 543–588 (ARGDADRDADHGANREVSREVSPEASREVSREVSCEVSHEADRDAA) are enriched in basic and acidic residues. A compositionally biased stretch (low complexity) spans 589–599 (ADAARVAGRAP). A compositionally biased stretch (basic and acidic residues) spans 621-639 (ADGDRASASRPRPDARGDA).

It belongs to the ATPase alpha/beta chains family. F-type ATPases have 2 components, CF(1) - the catalytic core - and CF(0) - the membrane proton channel. CF(1) has five subunits: alpha(3), beta(3), gamma(1), delta(1), epsilon(1). CF(0) has three main subunits: a(1), b(2) and c(9-12). The alpha and beta chains form an alternating ring which encloses part of the gamma chain. CF(1) is attached to CF(0) by a central stalk formed by the gamma and epsilon chains, while a peripheral stalk is formed by the delta and b chains.

Its subcellular location is the cell inner membrane. The enzyme catalyses ATP + H2O + 4 H(+)(in) = ADP + phosphate + 5 H(+)(out). In terms of biological role, produces ATP from ADP in the presence of a proton gradient across the membrane. The alpha chain is a regulatory subunit. This Burkholderia pseudomallei (strain 1710b) protein is ATP synthase subunit alpha 2.